A 251-amino-acid chain; its full sequence is 3-deoxy-manno-octulosonate cytidylyltransferase (251 aa).

This sequence belongs to the KdsB family.

It localises to the cytoplasm. It carries out the reaction 3-deoxy-alpha-D-manno-oct-2-ulosonate + CTP = CMP-3-deoxy-beta-D-manno-octulosonate + diphosphate. Its pathway is nucleotide-sugar biosynthesis; CMP-3-deoxy-D-manno-octulosonate biosynthesis; CMP-3-deoxy-D-manno-octulosonate from 3-deoxy-D-manno-octulosonate and CTP: step 1/1. The protein operates within bacterial outer membrane biogenesis; lipopolysaccharide biosynthesis. In terms of biological role, activates KDO (a required 8-carbon sugar) for incorporation into bacterial lipopolysaccharide in Gram-negative bacteria. In Rhizobium leguminosarum bv. trifolii (strain WSM2304), this protein is 3-deoxy-manno-octulosonate cytidylyltransferase.